The sequence spans 440 residues: Golgi reassembly-stacking protein 1 (440 aa).

A lipid anchor (N-myristoyl glycine) is attached at G2. PDZ GRASP-type domains follow at residues 15–105 and 111–199; these read EGFH…FCSF and QVWH…YGYL. Residues 15 to 215 are GRASP; the sequence is EGFHLHGVQE…PPSYHKKPPG (201 aa). The Zn(2+) site is built by H18, H20, and C103. Residues 190 to 202 form an essential for interaction with GOLGA2/GM130 region; the sequence is LGCGIGYGYLHRI. Disordered stretches follow at residues 205–248, 261–301, and 327–440; these read QPPS…ETGS, PGSS…PVQR, and LPSS…STTE. Pro residues predominate over residues 214–239; it reads PGTPPPSALPLGAPPPDALPPGPTPE. The residue at position 216 (T216) is a Phosphothreonine. Positions 327-336 are enriched in low complexity; the sequence is LPSSTELTTT. Positions 337–351 are enriched in polar residues; the sequence is AVSTSGPEDICSSSS. 3 positions are modified to phosphoserine: S362, S364, and S373.

This sequence belongs to the GORASP family. In terms of assembly, homodimer. Forms higher-order oligomers under interphase but not mitotic conditions. Dimers of the protein on one membrane might be able to interact with dimers on another and so stack cisternae. Interacts with the C-terminus of GOLGA2/GM130 under both mitotic and non-mitotic conditions. The interaction is critical for the correct targeting of both proteins to the cis-Golgi. Interacts with TMED2 and TMED3. In terms of processing, phosphorylated by CDC2/B1 and PLK kinases during mitosis. Phosphorylation cycle correlates with the cisternal stacking cycle. Phosphorylation of the homodimer prevents the association of dimers into higher-order oligomers, leading to cisternal unstacking. Target for caspase-3 cleavage during apoptosis. The cleavage contributes to Golgi fragmentation and occurs very early in the execution phase of apoptosis. Post-translationally, myristoylated.

It is found in the golgi apparatus. The protein localises to the cis-Golgi network membrane. Its subcellular location is the endoplasmic reticulum-Golgi intermediate compartment membrane. In terms of biological role, key structural protein of the Golgi apparatus. The membrane cisternae of the Golgi apparatus adhere to each other to form stacks, which are aligned side by side to form the Golgi ribbon. Acting in concert with GORASP2/GRASP55, is required for the formation and maintenance of the Golgi ribbon, and may be dispensable for the formation of stacks. However, other studies suggest that GORASP1 plays an important role in assembly and membrane stacking of the cisternae, and in the reassembly of Golgi stacks after breakdown during mitosis. Caspase-mediated cleavage of GORASP1 is required for fragmentation of the Golgi during apoptosis. Also mediates, via its interaction with GOLGA2/GM130, the docking of transport vesicles with the Golgi membranes. Mediates ER stress-induced unconventional (ER/Golgi-independent) trafficking of core-glycosylated CFTR to cell membrane. The sequence is that of Golgi reassembly-stacking protein 1 (GORASP1) from Homo sapiens (Human).